The chain runs to 389 residues: Transmembrane protease serine 11A (389 aa).

Topologically, residues 1 to 23 (MEVAGYGTHNRDLKQWMVTLLSA) are cytoplasmic. The helical; Signal-anchor for type II membrane protein transmembrane segment at 24–44 (LSLMMVVVTIGLLALFLVFDI) threads the bilayer. The region spanning 31–148 (VTIGLLALFL…SLVQVKDCGK (118 aa)) is the SEA domain. Residues 45-389 (QVNSNSGQKS…RHWIASKTGL (345 aa)) lie on the Extracellular side of the membrane. In terms of domain architecture, Peptidase S1 spans 158-388 (IVSGNPAAKG…YRHWIASKTG (231 aa)). Cysteines 183 and 199 form a disulfide. Residues H198 and D243 each act as charge relay system in the active site. N274 carries N-linked (GlcNAc...) asparagine glycosylation. Disulfide bonds link C308-C324 and C335-C364. S339 acts as the Charge relay system in catalysis.

This sequence belongs to the peptidase S1 family.

It localises to the membrane. Its function is as follows. Probable serine protease which may play a role in cellular senescence. Overexpression inhibits cell growth and induce G1 cell cycle arrest. The polypeptide is Transmembrane protease serine 11A (Tmprss11a) (Mus musculus (Mouse)).